The chain runs to 854 residues: A-kinase anchor protein 4 (854 aa).

The propeptide occupies Met1 to Asn188. 6 positions are modified to phosphoserine: Ser96, Ser130, Ser190, Ser213, Ser226, and Ser272. Residues Asn184 to Ser207 are disordered. Residues Phe219 to Ala232 are PKA-RI and PKA-RII subunit binding domain. Residues Arg287 to Lys323 form a disordered region. Basic and acidic residues predominate over residues Gly288–Gly297. Ser300 carries the post-translational modification Phosphoserine. Position 303 is a phosphotyrosine (Tyr303). Phosphoserine is present on residues Ser304 and Ser307. The span at Lys311–Lys323 shows a compositional bias: basic and acidic residues. The segment at Tyr336–Met345 is PKA-RI-alpha subunit binding domain. Ser342, Ser432, Ser443, Ser445, Ser447, Ser450, Ser464, and Ser492 each carry phosphoserine. At Thr506 the chain carries Phosphothreonine. Ser536, Ser581, Ser627, and Ser703 each carry phosphoserine.

The protein belongs to the AKAP110 family. As to quaternary structure, interacts with PRKAR1A and PRKAR2A. Interacts with ENO4. Interacts with QRICH2. Post-translationally, phosphorylated by STK33 during sperm flagella assembly. In terms of tissue distribution, testis specific; only expressed in round spermatids.

Its subcellular location is the cell projection. The protein resides in the cilium. The protein localises to the flagellum. Major structural component of sperm fibrous sheath. Plays a role in sperm motility. The chain is A-kinase anchor protein 4 from Homo sapiens (Human).